We begin with the raw amino-acid sequence, 130 residues long: MVMLDLLSNALIQIKNAEAMGKRQVAIWPVNKLIYYTLRVLQRHGYVGEVEYIDDGRGGKYVVQLLGKINDIGPIKPRYPVKYREIVQWEQKFLPARQIGILVISTNQGVMSHVEAKEKKIGGVLLAYVY.

It belongs to the universal ribosomal protein uS8 family. Part of the 30S ribosomal subunit.

One of the primary rRNA binding proteins, it binds directly to 16S rRNA central domain where it helps coordinate assembly of the platform of the 30S subunit. In Pyrobaculum neutrophilum (strain DSM 2338 / JCM 9278 / NBRC 100436 / V24Sta) (Thermoproteus neutrophilus), this protein is Small ribosomal subunit protein uS8.